Consider the following 195-residue polypeptide: MTPTLLSAFWTYTLITAMTPRPNNILALSSATSHGFRQSTRVLAGMSLGFLIVMLLCAGISFSLAVIDPAAVHLLSWAGAAYIVWLAWKIATSPTKEDGLQAKPISFWASFALQFVNVKIILYGVTALSTFVLPQTQALSWVVGVSVLLAMIGTFGNVCWALAGHLFQRLFRQYGRQLNIVLALLLVYCAVRIFY.

Helical transmembrane passes span 47-67, 70-90, 105-125, 142-162, and 177-194; these read SLGFLIVMLLCAGISFSLAVI, AAVHLLSWAGAAYIVWLAWKI, ISFWASFALQFVNVKIILYGV, VVGVSVLLAMIGTFGNVCWAL, and QLNIVLALLLVYCAVRIF.

Belongs to the Rht family.

The protein localises to the cell inner membrane. The catalysed reaction is O-acetyl-L-serine(in) = O-acetyl-L-serine(out). It carries out the reaction L-cysteine(in) = L-cysteine(out). In terms of biological role, exporter of O-acetylserine (OAS) and cysteine. This is Cysteine/O-acetylserine efflux protein (eamB) from Shigella boydii serotype 4 (strain Sb227).